A 307-amino-acid chain; its full sequence is Transcription initiation factor IIB 5 (307 aa).

Residues 19–47 form a TFIIB-type zinc finger; sequence TTEPCPECGGPVRTNSAETVCADCGLIID. The Zn(2+) site is built by C23, C26, C39, and C42. 2 stretches are compositionally biased toward basic and acidic residues: residues 54 to 66 and 107 to 121; these read GPEW…DTAK and MRRE…STKE. The disordered stretch occupies residues 54-121; sequence GPEWHRDDAD…SRGRWRSTKE (68 aa). Repeat copies occupy residues 129–212 and 223–304.

Belongs to the TFIIB family.

Functionally, stabilizes TBP binding to an archaeal box-A promoter. Also responsible for recruiting RNA polymerase II to the pre-initiation complex (DNA-TBP-TFIIB). This Halobacterium salinarum (strain ATCC 700922 / JCM 11081 / NRC-1) (Halobacterium halobium) protein is Transcription initiation factor IIB 5.